Here is a 1642-residue protein sequence, read N- to C-terminus: MATDGASCEPDFSRAPEDAAGAPAEAAKKEFDVDTLSKSELRMLLSVMEGELEARDLVIEALRARRKEVFIQERYGRFNLNDPFLALQRDYEAGASDKEKKPVCTNPLSILEAVMAHCRKMQERMSTQLAAAESRQKKLEMEKLQLQALEQEHKKLAARLEEERGKNKHVVLMLVKECKQLSGKVLEEAQKLEEVMAKLEEEKKKTSALEEELATEKRRSTEMEAQMEKQLSEFDTEREQLRAKLHREEAHTADLKEEIDKMKKMIEQLKRGTDSKPGLSLPRKTKDRRSISISVATEGPMTRSVACQTDLVMESAEPVKKLPLTVPVKPAAGSPPVAAGAKGNACASAAAVRPGVERQVSHGDLIGASLPAAPPPSANRIEENGPSTGSTADLTSSPTPVPSTVSPASGHTPAPPPHSLHSPCANAPLHPGLNPRIQAARFRFQGSNANDPDQNGNTTQSPPSRDVSPTSRDNLVAKQLARNTVTQALSRFTSPPAGAPPRPGAPPTGDVGTYPPVGRTSLKTPGGARVDRGNPPPIPPKKPGLSQTPSPPHPQLKVIMDSSRASSTGIKADNKTVASPPSTLPQGNRVMNEENLSKSSSPQLPPKPSIDLTVAPAGCAVSALATSQVGAWPAETPGLNQSACSERSLVIPTTTASSSSIHPVNASSRRAGASDSLLVTASGWSPSLTPLLMSGGPAPLAGRPTLLQQAAAQGNVTLLSMLLNEEGLDINYSCEDGHSALYSAAKNGHTDCVRLLLNAEAQVNAADKNGFTPLCAAAAQGHFKCVELLIAYDANINHAADGGQTPLYLACKNGNKECIKLLLEAGTDRSVKTRDGWTPIHAAVDTGNVDSLKLLMYHRAPAHGNKLREEPGLAIFDLDQEEERHEGTSKPVVPADLINHADSEGWTAAHIAASKGFKNCLEVLCRHGGLEPERRDKCNRTAHDVATDDCKHLLENLNALKIPLRISVGEIEPGNYGADDFECENTICALNIRKQTSWDDFSKAVSQALTNHFQAISSDGWWSLEDMTFNSTTDSSIGLSASSVRSITLGTVPWSAGQSFAQSPWDFVRTNKAEQVTVLLSGPQEGCLSSVTYASMIPLQMLQNYLRLVEQYHNVIFHGPEGSLQDYITHQLALCLKHRQMTAGFPCEIVRAEVDADFSKEQLVDLFISSACLIPVKQSPANKKIIVILENLEKSSLSELLGDFLGPLENHSTESPCTFQKGNGTSECYYFHENCFLMGTIAKACLQGSDLLVQQHFRWVQLRWDGEPMQGLLRRFLRRKVVNKFRGQVPSPCDPVCKTVDWALAVWRQLNSCLARLGTPEALLGPKYFLSCPVIPGHAQATVKWMSKLWNAVIAPRVQEAILSRASVKRQPGLGQTTKNPSQGQQAVVRAALSILLNKAVLHGCPLQRAELDQHTADFKGGSFPLSIVSSYSSCNKKKESGAWRKVSTSPRKKSGRFSSPTWNKPDLSEEGIKSNTILQLNCNRNASLSNQKSLENDLSLTLNLDQRLSLGSDDEADLVKELQSMCSSKSESDISKIADSRDDLRRFDSSGNNPVFSATVNNPRMPVSQKEVSPLSSHQTTECSNSKSKTELGVSRVKSFLPVPRSKVTQCSQNTKRSSSSSNTRQIEINNNSRDLEPTQK.

Disordered stretches follow at residues 1 to 27 (MATD…AEAA), 203 to 222 (KKKT…RSTE), 366 to 433 (IGAS…HPGL), 446 to 471 (GSNA…SPTS), and 491 to 611 (RFTS…PSID). Positions 119 to 276 (RKMQERMSTQ…EQLKRGTDSK (158 aa)) form a coiled coil. A compositionally biased stretch (polar residues) spans 385–394 (GPSTGSTADL). The span at 395–407 (TSSPTPVPSTVSP) shows a compositional bias: low complexity. Residue Arg491 is modified to Asymmetric dimethylarginine. Pro residues predominate over residues 497–506 (AGAPPRPGAP). Positions 576–586 (TVASPPSTLPQ) are enriched in polar residues. ANK repeat units follow at residues 702–732 (GRPT…DINY), 736–765 (DGHS…QVNA), 769–798 (NGFT…NINH), 802–831 (GGQT…DRSV), 835–864 (DGWT…PAHG), and 904–934 (EGWT…EPER). The disordered stretch occupies residues 1441–1469 (SGAWRKVSTSPRKKSGRFSSPTWNKPDLS). Ser1513 bears the Phosphoserine mark. The tract at residues 1545-1642 (LRRFDSSGNN…NSRDLEPTQK (98 aa)) is disordered. Polar residues-rich tracts occupy residues 1552–1563 (GNNPVFSATVNN) and 1571–1588 (KEVS…SNSK). A compositionally biased stretch (low complexity) spans 1613 to 1627 (SQNTKRSSSSSNTRQ).

In terms of assembly, interacts with CTTN/cortactin SH3 domain. Interacts with STRN, STRN4/zinedin and MOB4/phocein; this interactions mediate the association with the STRIPAK core complex and may regulate dendritic spine distribution of the STRIPAK complex in hippocampal neurons. Activation of glutamate receptors weakens the interaction with STRN and STRN4.

The protein resides in the cytoplasm. It localises to the cell cortex. Its subcellular location is the cell projection. It is found in the dendritic spine. Its function is as follows. Regulates the dendritic spine distribution of CTTN/cortactin in hippocampal neurons, and thus controls dendritic spinogenesis and dendritic spine maintenance. Associates with the striatin-interacting phosphatase and kinase (STRIPAK) core complex to regulate dendritic spine distribution of the STRIPAK complex in hippocampal neurons. This chain is Cortactin-binding protein 2 (CTTNBP2), found in Muntiacus muntjak (Barking deer).